The sequence spans 217 residues: Protein GrpE (217 aa).

A disordered region spans residues M1–S63. Basic and acidic residues predominate over residues K10 to L32. Residues S37 to S63 are compositionally biased toward low complexity.

The protein belongs to the GrpE family. As to quaternary structure, homodimer.

Its subcellular location is the cytoplasm. Participates actively in the response to hyperosmotic and heat shock by preventing the aggregation of stress-denatured proteins, in association with DnaK and GrpE. It is the nucleotide exchange factor for DnaK and may function as a thermosensor. Unfolded proteins bind initially to DnaJ; upon interaction with the DnaJ-bound protein, DnaK hydrolyzes its bound ATP, resulting in the formation of a stable complex. GrpE releases ADP from DnaK; ATP binding to DnaK triggers the release of the substrate protein, thus completing the reaction cycle. Several rounds of ATP-dependent interactions between DnaJ, DnaK and GrpE are required for fully efficient folding. This Leptospira borgpetersenii serovar Hardjo-bovis (strain JB197) protein is Protein GrpE.